The chain runs to 430 residues: Small ribosomal subunit protein uS3m (430 aa).

It belongs to the universal ribosomal protein uS3 family.

It localises to the mitochondrion. The polypeptide is Small ribosomal subunit protein uS3m (RPS3) (Marchantia polymorpha (Common liverwort)).